We begin with the raw amino-acid sequence, 331 residues long: UBX domain-containing protein 2B (331 aa).

Disordered regions lie at residues 1–26 (MAEG…SARD) and 40–65 (KCKS…QRFY). N-acetylalanine is present on A2. S56 is modified (phosphoserine). T59 bears the Phosphothreonine mark. Phosphoserine is present on S66. The 66-residue stretch at 141-206 (DVQILLKLWS…MEDHQDQEYI (66 aa)) folds into the SEP domain. Residues S231, S234, and S235 each carry the phosphoserine modification. Residues 252–329 (DSVPTTKIQI…DILNTVLLQQ (78 aa)) form the UBX domain.

The protein belongs to the NSFL1C family. Interacts with VCP. Does not bind ubiquitin.

Its subcellular location is the nucleus. It localises to the cytoplasm. The protein resides in the cytosol. The protein localises to the endoplasmic reticulum. It is found in the golgi apparatus. Its subcellular location is the cytoskeleton. It localises to the microtubule organizing center. The protein resides in the centrosome. Adapter protein required for Golgi and endoplasmic reticulum biogenesis. Involved in Golgi and endoplasmic reticulum maintenance during interphase and in their reassembly at the end of mitosis. The complex formed with VCP has membrane fusion activity; membrane fusion activity requires USO1-GOLGA2 tethering and BET1L. VCPIP1 is also required, but not its deubiquitinating activity. Together with NSFL1C/p47, regulates the centrosomal levels of kinase AURKA/Aurora A during mitotic progression by promoting AURKA removal from centrosomes in prophase. Also, regulates spindle orientation during mitosis. This chain is UBX domain-containing protein 2B (UBXN2B), found in Homo sapiens (Human).